The sequence spans 296 residues: Lipoyl synthase (296 aa).

[4Fe-4S] cluster-binding residues include cysteine 34, cysteine 39, cysteine 45, cysteine 60, cysteine 64, cysteine 67, and serine 276. Residues 46-265 (WGEGTATFMI…GEVALSMGFK (220 aa)) enclose the Radical SAM core domain.

The protein belongs to the radical SAM superfamily. Lipoyl synthase family. It depends on [4Fe-4S] cluster as a cofactor.

It localises to the cytoplasm. The catalysed reaction is [[Fe-S] cluster scaffold protein carrying a second [4Fe-4S](2+) cluster] + N(6)-octanoyl-L-lysyl-[protein] + 2 oxidized [2Fe-2S]-[ferredoxin] + 2 S-adenosyl-L-methionine + 4 H(+) = [[Fe-S] cluster scaffold protein] + N(6)-[(R)-dihydrolipoyl]-L-lysyl-[protein] + 4 Fe(3+) + 2 hydrogen sulfide + 2 5'-deoxyadenosine + 2 L-methionine + 2 reduced [2Fe-2S]-[ferredoxin]. The protein operates within protein modification; protein lipoylation via endogenous pathway; protein N(6)-(lipoyl)lysine from octanoyl-[acyl-carrier-protein]: step 2/2. In terms of biological role, catalyzes the radical-mediated insertion of two sulfur atoms into the C-6 and C-8 positions of the octanoyl moiety bound to the lipoyl domains of lipoate-dependent enzymes, thereby converting the octanoylated domains into lipoylated derivatives. This is Lipoyl synthase from Pyrobaculum arsenaticum (strain DSM 13514 / JCM 11321 / PZ6).